We begin with the raw amino-acid sequence, 53 residues long: EAEEAARLQAEAEEAARQQAEAEEAARLQAEAEEAARLQAEAEEAARLQAEAE.

6 consecutive repeat copies span residues 1 to 10 (EAEEAARLQA), 11 to 20 (EAEEAARQQA), 21 to 30 (EAEEAARLQA), 31 to 40 (EAEEAARLQA), 41 to 50 (EAEEAARLQA), and 51 to 53 (EAE). Residues 1-53 (EAEEAARLQAEAEEAARQQAEAEEAARLQAEAEEAARLQAEAEEAARLQAEAE) are 6 X 10 AA tandem repeats. Residues 1-53 (EAEEAARLQAEAEEAARQQAEAEEAARLQAEAEEAARLQAEAEEAARLQAEAE) are disordered.

It localises to the membrane. This Leishmania major protein is Membrane antigen containing repeating peptides.